An 810-amino-acid chain; its full sequence is RING finger protein unkempt homolog (810 aa).

The interval Met1–Leu24 is disordered. Low complexity predominate over residues Ser10 to Ala19. 5 consecutive C3H1-type zinc fingers follow at residues Tyr84 to Thr113, Tyr124 to His154, Asn215 to Lys241, Lys251 to Thr285, and Ile293 to Pro321. Residues Asn239–Glu265 form a disordered region. At Ser240 the chain carries Phosphoserine. Positions Lys241 to Arg253 are enriched in basic residues. Phosphoserine occurs at positions 374, 378, 385, and 394. The segment at Thr478–Met497 is disordered. At Ser631 the chain carries Phosphoserine. Residues Gly643–Gln727 are a coiled coil. The RING-type; degenerate zinc-finger motif lies at Ser766–Gln801.

It belongs to the unkempt family.

It is found in the cytoplasm. Sequence-specific RNA-binding protein which plays an important role in the establishment and maintenance of the early morphology of cortical neurons during embryonic development. Acts as a translation repressor and controls a translationally regulated cell morphology program to ensure proper structuring of the nervous system. Translational control depends on recognition of its binding element within target mRNAs which consists of a mandatory UAG trimer upstream of a U/A-rich motif. Associated with polysomes. This is RING finger protein unkempt homolog (Unk) from Mus musculus (Mouse).